Reading from the N-terminus, the 689-residue chain is Protein asunder (689 aa).

Positions 521–550 (NGARLKLSKAKDQYRLLYRELEQLIQLNAT) form a coiled coil. 2 disordered regions span residues 578 to 619 (GASL…SKRR) and 662 to 689 (PDFG…SVRS). Residues 599–614 (SSGSASGSSNSNSLLK) show a composition bias toward low complexity. The Nuclear localization signal (NLS) motif lies at 613 to 619 (LKASKRR).

It belongs to the Integrator subunit 13 family. As to quaternary structure, belongs to the multiprotein complex Integrator, at least composed of IntS1, IntS2, IntS3, IntS4, omd/IntS5, IntS6, defl/IntS7, IntS8, IntS9, IntS10, IntS11, IntS12, asun/IntS13, IntS14 and IntS15. The core complex associates with protein phosphatase 2A subunits mts/PP2A and Pp2A-29B, to form the Integrator-PP2A (INTAC) complex. In terms of processing, phosphorylated.

The protein localises to the nucleus. The protein resides in the cytoplasm. It is found in the perinuclear region. In terms of biological role, component of the integrator complex, a multiprotein complex that terminates RNA polymerase II (Pol II) transcription in the promoter-proximal region of genes. The integrator complex provides a quality checkpoint during transcription elongation by driving premature transcription termination of transcripts that are unfavorably configured for transcriptional elongation: the complex terminates transcription by (1) catalyzing dephosphorylation of the C-terminal domain (CTD) of Pol II subunit Polr2A/Rbp1 and Spt5, and (2) degrading the exiting nascent RNA transcript via endonuclease activity. The integrator complex is also involved in the 3'-end processing of the U7 snRNA, and also the spliceosomal snRNAs U1, U2, U4 and U5. The polypeptide is Protein asunder (asun) (Drosophila yakuba (Fruit fly)).